The sequence spans 438 residues: UDP-N-acetylmuramoylalanine--D-glutamate ligase (438 aa).

Residue 112–118 (GSNGKST) participates in ATP binding.

The protein belongs to the MurCDEF family.

It localises to the cytoplasm. The enzyme catalyses UDP-N-acetyl-alpha-D-muramoyl-L-alanine + D-glutamate + ATP = UDP-N-acetyl-alpha-D-muramoyl-L-alanyl-D-glutamate + ADP + phosphate + H(+). It functions in the pathway cell wall biogenesis; peptidoglycan biosynthesis. Cell wall formation. Catalyzes the addition of glutamate to the nucleotide precursor UDP-N-acetylmuramoyl-L-alanine (UMA). This chain is UDP-N-acetylmuramoylalanine--D-glutamate ligase, found in Shigella dysenteriae serotype 1 (strain Sd197).